Reading from the N-terminus, the 1464-residue chain is Secretory phospholipase A2 receptor (1464 aa).

Positions 1 to 22 (MLLSPSLLLPLLLLLGAPRGCA) are cleaved as a signal peptide. The Extracellular portion of the chain corresponds to 23-1398 (EGVAAALTPE…ELPEKGPSHS (1376 aa)). The 124-residue stretch at 40-163 (KGIFVIQSES…GSGGGDICEY (124 aa)) folds into the Ricin B-type lectin domain. 17 disulfide bridges follow: cysteine 53–cysteine 66, cysteine 91–cysteine 108, cysteine 180–cysteine 206, cysteine 194–cysteine 221, cysteine 262–cysteine 356, cysteine 332–cysteine 348, cysteine 408–cysteine 503, cysteine 480–cysteine 495, cysteine 619–cysteine 636, cysteine 701–cysteine 798, cysteine 776–cysteine 790, cysteine 842–cysteine 939, cysteine 916–cysteine 931, cysteine 1069–cysteine 1089, cysteine 1211–cysteine 1225, cysteine 1282–cysteine 1378, and cysteine 1356–cysteine 1370. Asparagine 95 is a glycosylation site (N-linked (GlcNAc...) asparagine). One can recognise a Fibronectin type-II domain in the interval 175–223 (AHGMPCMFPFQYNHQWHHECTREGREDDLLWCATTSRYERDEKWGFCPD). 8 consecutive C-type lectin domains span residues 240-357 (NSHI…YVCK), 387-504 (YNRN…YVCK), 524-645 (HGGF…MSLC), 675-799 (GLAS…WICK), 821-940 (YQDA…SICK), 967-1098 (FNYK…GFVC), 1123-1234 (YGNR…GAIC), and 1259-1379 (FKSN…FICK). N-linked (GlcNAc...) asparagine glycosylation is present at asparagine 456. A helical transmembrane segment spans residues 1399 to 1419 (IIPLAVVLTLIVIVAICTLSF). Residues 1420 to 1464 (CIYKHNGGFFRRLAGFRNPYYPATNFSTVHLEENILISDLEKSDQ) are Cytoplasmic-facing. Residues 1437–1443 (NPYYPAT) carry the Endocytosis signal motif.

In terms of assembly, interacts with sPLA2-IB/PLA2G1B; this interaction mediates intracellular signaling as well as clearance of extracellular sPLA2-IB/PLA2G1B via endocytotic pathway. Interacts with sPLA2-X/PLA2G10; this interaction mediates sPLA2-X/PLA2G10 clearance and inactivation. The secretory phospholipase A2 receptor form may be produced by the action of metalloproteinases. It contains all extracellular domains and only lacks transmembrane and cytosolic regions. It is however unclear whether this form is produced by proteolytic cleavage as suggested by some experiments, or by alternative splicing.

It localises to the cell membrane. The protein resides in the secreted. Its function is as follows. Receptor for secretory phospholipase A2 (sPLA2). Also able to bind to snake PA2-like toxins. Although its precise function remains unclear, binding of sPLA2 to its receptor participates in both positive and negative regulation of sPLA2 functions as well as clearance of sPLA2. Binding of sPLA2-IB/PLA2G1B induces various effects depending on the cell type, such as activation of the mitogen-activated protein kinase (MAPK) cascade to induce cell proliferation, the production of lipid mediators, selective release of arachidonic acid in bone marrow-derived mast cells. In neutrophils, binding of sPLA2-IB/PLA2G1B can activate p38 MAPK to stimulate elastase release and cell adhesion. May be involved in responses in pro-inflammatory cytokine productions during endotoxic shock. Also has endocytic properties and rapidly internalizes sPLA2 ligands, which is particularly important for the clearance of extracellular sPLA2s to protect their potent enzymatic activities. The soluble secretory phospholipase A2 receptor form is circulating and acts as a negative regulator of sPLA2 functions by blocking the biological functions of sPLA2-IB/PLA2G1B and sPLA2-X/PLA2G10. This Pongo abelii (Sumatran orangutan) protein is Secretory phospholipase A2 receptor (PLA2R1).